We begin with the raw amino-acid sequence, 101 residues long: NAD(P)H-quinone oxidoreductase subunit 4L, chloroplastic (101 aa).

3 helical membrane passes run 2 to 22 (MLEHVLVLSAYLFSIGIYGLI), 32 to 52 (MCLELILNAVNMNLVTFSDLF), and 61 to 81 (VFSIFVIAIAAAEAAIGPAIV).

The protein belongs to the complex I subunit 4L family. As to quaternary structure, NDH is composed of at least 16 different subunits, 5 of which are encoded in the nucleus.

It localises to the plastid. The protein localises to the chloroplast thylakoid membrane. The enzyme catalyses a plastoquinone + NADH + (n+1) H(+)(in) = a plastoquinol + NAD(+) + n H(+)(out). It catalyses the reaction a plastoquinone + NADPH + (n+1) H(+)(in) = a plastoquinol + NADP(+) + n H(+)(out). NDH shuttles electrons from NAD(P)H:plastoquinone, via FMN and iron-sulfur (Fe-S) centers, to quinones in the photosynthetic chain and possibly in a chloroplast respiratory chain. The immediate electron acceptor for the enzyme in this species is believed to be plastoquinone. Couples the redox reaction to proton translocation, and thus conserves the redox energy in a proton gradient. This chain is NAD(P)H-quinone oxidoreductase subunit 4L, chloroplastic, found in Nuphar advena (Common spatterdock).